The primary structure comprises 490 residues: Glucose-6-phosphate 1-dehydrogenase (490 aa).

NADP(+) is bound by residues arginine 48, 90 to 91 (DI), and lysine 145. Residues histidine 175, lysine 179, glutamate 213, and aspartate 232 each contribute to the substrate site. The active-site Proton acceptor is histidine 237. Lysine 340 and lysine 345 together coordinate substrate.

This sequence belongs to the glucose-6-phosphate dehydrogenase family.

The catalysed reaction is D-glucose 6-phosphate + NADP(+) = 6-phospho-D-glucono-1,5-lactone + NADPH + H(+). It participates in carbohydrate degradation; pentose phosphate pathway; D-ribulose 5-phosphate from D-glucose 6-phosphate (oxidative stage): step 1/3. Catalyzes the oxidation of glucose 6-phosphate to 6-phosphogluconolactone. This chain is Glucose-6-phosphate 1-dehydrogenase, found in Buchnera aphidicola subsp. Baizongia pistaciae (strain Bp).